A 242-amino-acid polypeptide reads, in one-letter code: Uridylate kinase (242 aa).

17 to 20 provides a ligand contact to ATP; sequence KLGG. Glycine 58 provides a ligand contact to UMP. 2 residues coordinate ATP: glycine 59 and arginine 63. Residues aspartate 78 and 139–146 each bind UMP; that span reads MGMPYFST. ATP-binding residues include phenylalanine 172 and aspartate 175.

The protein belongs to the UMP kinase family. In terms of assembly, homohexamer.

It is found in the cytoplasm. The catalysed reaction is UMP + ATP = UDP + ADP. Its pathway is pyrimidine metabolism; CTP biosynthesis via de novo pathway; UDP from UMP (UMPK route): step 1/1. With respect to regulation, inhibited by UTP. Its function is as follows. Catalyzes the reversible phosphorylation of UMP to UDP. The sequence is that of Uridylate kinase from Rhodococcus jostii (strain RHA1).